The chain runs to 185 residues: Ribosome-recycling factor (185 aa).

It belongs to the RRF family.

The protein resides in the cytoplasm. In terms of biological role, responsible for the release of ribosomes from messenger RNA at the termination of protein biosynthesis. May increase the efficiency of translation by recycling ribosomes from one round of translation to another. The polypeptide is Ribosome-recycling factor (Chromobacterium violaceum (strain ATCC 12472 / DSM 30191 / JCM 1249 / CCUG 213 / NBRC 12614 / NCIMB 9131 / NCTC 9757 / MK)).